The primary structure comprises 705 residues: MKSQILLRRTYSTTIPPPTANVRITHLSRIGKIHEARKLFDSCDSKSISSWNSMVAGYFANLMPRDARKLFDEMPDRNIISWNGLVSGYMKNGEIDEARKVFDLMPERNVVSWTALVKGYVHNGKVDVAESLFWKMPEKNKVSWTVMLIGFLQDGRIDDACKLYEMIPDKDNIARTSMIHGLCKEGRVDEAREIFDEMSERSVITWTTMVTGYGQNNRVDDARKIFDVMPEKTEVSWTSMLMGYVQNGRIEDAEELFEVMPVKPVIACNAMISGLGQKGEIAKARRVFDSMKERNDASWQTVIKIHERNGFELEALDLFILMQKQGVRPTFPTLISILSVCASLASLHHGKQVHAQLVRCQFDVDVYVASVLMTMYIKCGELVKSKLIFDRFPSKDIIMWNSIISGYASHGLGEEALKVFCEMPLSGSTKPNEVTFVATLSACSYAGMVEEGLKIYESMESVFGVKPITAHYACMVDMLGRAGRFNEAMEMIDSMTVEPDAAVWGSLLGACRTHSQLDVAEFCAKKLIEIEPENSGTYILLSNMYASQGRWADVAELRKLMKTRLVRKSPGCSWTEVENKVHAFTRGGINSHPEQESILKILDELDGLLREAGYNPDCSYALHDVDEEEKVNSLKYHSERLAVAYALLKLSEGIPIRVMKNLRVCSDCHTAIKIISKVKEREIILRDANRFHHFRNGECSCKDYW.

A mitochondrion-targeting transit peptide spans 1 to 11; that stretch reads MKSQILLRRTY. PPR repeat units lie at residues 16-46, 47-77, 78-112, 113-139, 140-170, 171-205, 206-232, 233-267, 268-294, 295-329, 330-364, 365-395, 396-430, 432-462, and 468-498; these read PPPT…CDSK, SISS…MPDR, NIIS…NVVS, WTAL…MPEK, NKVS…IPDK, DNIA…SVIT, WTTM…MPEK, TEVS…PVIA, CNAM…MKER, NDAS…GVRP, TFPT…QFDV, DVYV…FPSK, DIIM…GSTK, NEVT…MESV, and ITAH…MTVE. Residues 503–578 form a type E motif region; that stretch reads VWGSLLGACR…SPGCSWTEVE (76 aa). Residues 579 to 610 are type E(+) motif; that stretch reads NKVHAFTRGGINSHPEQESILKILDELDGLLR. A type DYW motif region spans residues 611–705; the sequence is EAGYNPDCSY…NGECSCKDYW (95 aa).

The protein belongs to the PPR family. PCMP-H subfamily.

Its subcellular location is the mitochondrion. This Arabidopsis thaliana (Mouse-ear cress) protein is Pentatricopeptide repeat-containing protein At1g09410, mitochondrial (PCMP-H18).